The chain runs to 712 residues: 1,4-alpha-glucan branching enzyme GlgB (712 aa).

Residue Asp-397 is the Nucleophile of the active site. Residue Glu-450 is the Proton donor of the active site.

The protein belongs to the glycosyl hydrolase 13 family. GlgB subfamily. Monomer.

It catalyses the reaction Transfers a segment of a (1-&gt;4)-alpha-D-glucan chain to a primary hydroxy group in a similar glucan chain.. The protein operates within glycan biosynthesis; glycogen biosynthesis. Functionally, catalyzes the formation of the alpha-1,6-glucosidic linkages in glycogen by scission of a 1,4-alpha-linked oligosaccharide from growing alpha-1,4-glucan chains and the subsequent attachment of the oligosaccharide to the alpha-1,6 position. In Bradyrhizobium sp. (strain BTAi1 / ATCC BAA-1182), this protein is 1,4-alpha-glucan branching enzyme GlgB.